The following is a 128-amino-acid chain: MAFKVVVSQKEVTHQIEVEDGKALNGLVIGDEFDGGIVGLDGYTLKVTGGADKNGFTMKKDVPGTRRIKSLLSGGIGYHPKSDGVKRRKTVRGNTIADDIVQVNTVVVSAGSKAIADILGVGDEEEEE.

It belongs to the eukaryotic ribosomal protein eS6 family.

The chain is Small ribosomal subunit protein eS6 from Methanobrevibacter smithii (strain ATCC 35061 / DSM 861 / OCM 144 / PS).